Consider the following 278-residue polypeptide: Sulfide dehydrogenase subunit beta (278 aa).

The propeptide occupies 1-4 (MFKI). The region spanning 1-95 (MFKILRKERL…LGPLGKPSHI (95 aa)) is the FAD-binding FR-type domain. [2Fe-2S] cluster is bound by residues C222, C225, and C237.

As to quaternary structure, heterodimer of alpha and beta subunits. It depends on FAD as a cofactor. [2Fe-2S] cluster serves as cofactor.

It localises to the cytoplasm. It carries out the reaction n sulfur + hydrogen sulfide + NADP(+) = (n+1) sulfur + NADPH. It catalyses the reaction 2 reduced [2Fe-2S]-[ferredoxin] + NADP(+) + H(+) = 2 oxidized [2Fe-2S]-[ferredoxin] + NADPH. A bifunctional enzyme that catalyzes the reduction of elemental sulfur or polysulfide to hydrogen sulfide with NADPH as electron donor. Also functions as a reduced ferredoxin:NADP oxidoreductase with a very high affinity for reduced ferredoxin. Exhibits a broad specificity for various physiological and non-physiological substrates with varied reduction potentials such as methyl viologen, benzyl viologen, FAD, FMN, methylene blue, 2,6-dichlorophenolindophenol (DCIP), cytochrome C and ferricyanide with highest preference for benzyl viologen. Does not reduce fumarate, succinate, nitrate, nitrite, sulfate, sulfite or protons. Does not possess any hydrogenase activity or NADPH-dependent glutamate synthase activity. This Pyrococcus furiosus (strain ATCC 43587 / DSM 3638 / JCM 8422 / Vc1) protein is Sulfide dehydrogenase subunit beta.